The chain runs to 310 residues: Ribose-phosphate pyrophosphokinase (310 aa).

ATP contacts are provided by residues 34–36 (DME) and 93–94 (RQ). Positions 127 and 167 each coordinate Mg(2+). Lys-190 is an active-site residue. D-ribose 5-phosphate contacts are provided by residues Arg-192, Asp-216, and 220–224 (DSGGT).

This sequence belongs to the ribose-phosphate pyrophosphokinase family. Class I subfamily. Homohexamer. It depends on Mg(2+) as a cofactor.

It is found in the cytoplasm. It catalyses the reaction D-ribose 5-phosphate + ATP = 5-phospho-alpha-D-ribose 1-diphosphate + AMP + H(+). It participates in metabolic intermediate biosynthesis; 5-phospho-alpha-D-ribose 1-diphosphate biosynthesis; 5-phospho-alpha-D-ribose 1-diphosphate from D-ribose 5-phosphate (route I): step 1/1. In terms of biological role, involved in the biosynthesis of the central metabolite phospho-alpha-D-ribosyl-1-pyrophosphate (PRPP) via the transfer of pyrophosphoryl group from ATP to 1-hydroxyl of ribose-5-phosphate (Rib-5-P). This is Ribose-phosphate pyrophosphokinase from Granulibacter bethesdensis (strain ATCC BAA-1260 / CGDNIH1).